We begin with the raw amino-acid sequence, 525 residues long: Probable protein kinase UbiB (525 aa).

The Protein kinase domain maps to 118–500; the sequence is DFERVPVASA…QKRTNRLLQG (383 aa). Residues 124-132 and Lys150 each bind ATP; that span reads VASASIAQV. Catalysis depends on Asp285, which acts as the Proton acceptor. The helical transmembrane segment at 501-521 threads the bilayer; it reads LLLFGVAVGVGAVLARAFLAL.

Belongs to the ABC1 family. UbiB subfamily.

The protein localises to the cell inner membrane. It functions in the pathway cofactor biosynthesis; ubiquinone biosynthesis [regulation]. In terms of biological role, is probably a protein kinase regulator of UbiI activity which is involved in aerobic coenzyme Q (ubiquinone) biosynthesis. In Paraburkholderia phytofirmans (strain DSM 17436 / LMG 22146 / PsJN) (Burkholderia phytofirmans), this protein is Probable protein kinase UbiB.